A 103-amino-acid polypeptide reads, in one-letter code: N(4)-acetylcytidine amidohydrolase (103 aa).

The 95-residue stretch at I6 to F100 folds into the ASCH domain. Residue K21 is the Proton acceptor of the active site. Catalysis depends on T24, which acts as the Nucleophile. The active-site Proton donor is E74.

Belongs to the N(4)-acetylcytidine amidohydrolase family.

It catalyses the reaction N(4)-acetylcytidine + H2O = cytidine + acetate + H(+). The enzyme catalyses N(4)-acetyl-2'-deoxycytidine + H2O = 2'-deoxycytidine + acetate + H(+). It carries out the reaction N(4)-acetylcytosine + H2O = cytosine + acetate + H(+). Its function is as follows. Catalyzes the hydrolysis of N(4)-acetylcytidine (ac4C). In Salmonella arizonae (strain ATCC BAA-731 / CDC346-86 / RSK2980), this protein is N(4)-acetylcytidine amidohydrolase (yqfB).